The chain runs to 68 residues: Small integral membrane protein 10-like protein 3 (68 aa).

In terms of tissue distribution, expressed specifically in salivary glands (at protein level).

The chain is Small integral membrane protein 10-like protein 3 from Mus musculus (Mouse).